Consider the following 90-residue polypeptide: Putative regulatory protein Dred_1699 (90 aa).

Belongs to the RemA family.

In Desulforamulus reducens (strain ATCC BAA-1160 / DSM 100696 / MI-1) (Desulfotomaculum reducens), this protein is Putative regulatory protein Dred_1699.